We begin with the raw amino-acid sequence, 620 residues long: Translation initiation factor IF-2 (620 aa).

The tr-type G domain maps to 126–295; that stretch reads KRPPIVTIMG…IVTAEIMELK (170 aa). The tract at residues 135 to 142 is G1; it reads GHVDHGKT. 135–142 contacts GTP; sequence GHVDHGKT. Residues 160 to 164 form a G2 region; that stretch reads NITQS. Residues 181 to 184 form a G3 region; sequence DTPG. GTP is bound by residues 181–185 and 235–238; these read DTPGH and NKMD. The tract at residues 235 to 238 is G4; sequence NKMD. The G5 stretch occupies residues 271-273; sequence SAL.

It belongs to the TRAFAC class translation factor GTPase superfamily. Classic translation factor GTPase family. IF-2 subfamily.

The protein resides in the cytoplasm. Its function is as follows. One of the essential components for the initiation of protein synthesis. Protects formylmethionyl-tRNA from spontaneous hydrolysis and promotes its binding to the 30S ribosomal subunits. Also involved in the hydrolysis of GTP during the formation of the 70S ribosomal complex. This chain is Translation initiation factor IF-2, found in Malacoplasma penetrans (strain HF-2) (Mycoplasma penetrans).